Reading from the N-terminus, the 357-residue chain is Protein RecA (357 aa).

Position 71-78 (71-78 (GPESSGKT)) interacts with ATP.

The protein belongs to the RecA family.

It localises to the cytoplasm. Functionally, can catalyze the hydrolysis of ATP in the presence of single-stranded DNA, the ATP-dependent uptake of single-stranded DNA by duplex DNA, and the ATP-dependent hybridization of homologous single-stranded DNAs. It interacts with LexA causing its activation and leading to its autocatalytic cleavage. In Ehrlichia canis (strain Jake), this protein is Protein RecA.